A 185-amino-acid polypeptide reads, in one-letter code: Inner membrane-spanning protein YciB (185 aa).

5 helical membrane-spanning segments follow: residues I19–W39, T49–H69, T72–T92, G122–F142, and F150–I170.

This sequence belongs to the YciB family.

It is found in the cell inner membrane. In terms of biological role, plays a role in cell envelope biogenesis, maintenance of cell envelope integrity and membrane homeostasis. This is Inner membrane-spanning protein YciB from Acidithiobacillus ferrooxidans (strain ATCC 23270 / DSM 14882 / CIP 104768 / NCIMB 8455) (Ferrobacillus ferrooxidans (strain ATCC 23270)).